The following is a 378-amino-acid chain: Pre-B-cell leukemia transcription factor 4 (378 aa).

The span at 1 to 15 shows a compositional bias: pro residues; the sequence is MAAPLRPVPPQPAPR. Disordered stretches follow at residues 1–24 and 100–125; these read MAAP…APLG and VSRP…PNDN. Positions 22–214 constitute a PBC domain; sequence PLGHDTSDVL…VMTLRSRFLD (193 aa). The interval 29 to 107 is PBC-A; that stretch reads DVLQQIMAIT…EGVSRPEKRG (79 aa). Low complexity predominate over residues 109-120; it reads GAAAGSTATPGG. The interval 110 to 214 is PBC-B; that stretch reads AAAGSTATPG…VMTLRSRFLD (105 aa). A DNA-binding region (homeobox; TALE-type) is located at residues 215–277; sequence ARRKRRNFSK…NKRIRYKKNT (63 aa). 2 disordered regions span residues 291–320 and 355–378; these read ASTV…PLPL and RAAP…AASN. A compositionally biased stretch (low complexity) spans 356-370; that stretch reads AAPQPASSPAGESGS.

The protein belongs to the TALE/PBX homeobox family. Almost exclusively expressed in testis.

The protein resides in the nucleus. This Mus musculus (Mouse) protein is Pre-B-cell leukemia transcription factor 4 (Pbx4).